The following is a 460-amino-acid chain: MTVEQNTPDQDTIVAQATASGRGGVGIVRVSGSLAAKVAEQIIGHVPLIRNAQYVPFKSNTGEPLDQGIALFFKAPHSFTGEDVLELQGHGGQVVLDMLIKATLHVPNVRLARPGEFSERAYLNDKLDLAQAEAIADLIDASSEQAARGALRSLQGEFSTQINSLVELLTHLRIYVEAAIDFPDEEIDFLSDGKVQNDLKAITKQLSSVKSQARQGSLLREGMRVVIAGRPNAGKSSLLNALAGRDAAIVTAIAGTTRDVLKEHIHIDGMPLHIIDTAGLRDSSDEVERIGIERAWQEIEQADRVLFMLDSTETHENDPYKIWPEFMRRLPKNMGLTVIRNKADLSGENVGKVQYDDYPVFQLSASHKQGIEVLAEHLKECMGFHSSNEGQFIARRRHIDAIERAEEHLLLGKQQLEDNLAGELLAEELRLAQAYLSEITGEFSSDDLLGKIFSSFCIGK.

R29, E86, and K126 together coordinate (6S)-5-formyl-5,6,7,8-tetrahydrofolate. Residues 222–383 (GMRVVIAGRP…LAEHLKECMG (162 aa)) enclose the TrmE-type G domain. K(+) is bound at residue N232. GTP-binding positions include 232–237 (NAGKSS), 251–257 (TAIAGTT), 276–279 (DTAG), and 341–344 (NKAD). S236 contributes to the Mg(2+) binding site. Residues T251, I253, and T256 each contribute to the K(+) site. Residue T257 participates in Mg(2+) binding. K460 is a (6S)-5-formyl-5,6,7,8-tetrahydrofolate binding site.

This sequence belongs to the TRAFAC class TrmE-Era-EngA-EngB-Septin-like GTPase superfamily. TrmE GTPase family. As to quaternary structure, homodimer. Heterotetramer of two MnmE and two MnmG subunits. K(+) serves as cofactor.

The protein resides in the cytoplasm. Its function is as follows. Exhibits a very high intrinsic GTPase hydrolysis rate. Involved in the addition of a carboxymethylaminomethyl (cmnm) group at the wobble position (U34) of certain tRNAs, forming tRNA-cmnm(5)s(2)U34. The protein is tRNA modification GTPase MnmE of Pseudoalteromonas atlantica (strain T6c / ATCC BAA-1087).